A 408-amino-acid polypeptide reads, in one-letter code: Tripartite motif containing 13 (408 aa).

Residues 10-58 form an RING-type zinc finger; sequence CPICCSLFDDPRVLPCSHNFCKKCLDGVLEENSRTMQWRPSSFKCPTCR. The segment at 89-131 adopts a B box-type zinc-finger fold; the sequence is PKMPVCKEHSDQPLNIFCSTDLKLICGSCATTGEHKKHVFSSI. Residues Cys94, His97, Cys117, and His123 each contribute to the Zn(2+) site. Residues 322-342 traverse the membrane as a helical segment; that stretch reads ILVVACLILLLVTFLCAYPFI.

It is found in the endoplasmic reticulum membrane. The protein operates within protein modification; protein ubiquitination. Functionally, E3 ubiquitin ligase involved in the retrotranslocation and turnover of membrane and secretory proteins from the ER through a set of processes named ER-associated degradation (ERAD). This process acts on misfolded proteins as well as in the regulated degradation of correctly folded proteins. The chain is Tripartite motif containing 13 (trim13) from Xenopus tropicalis (Western clawed frog).